The primary structure comprises 931 residues: Neuropilin-2 (931 aa).

The signal sequence occupies residues 1 to 20; the sequence is MDMFPLTWVFLALYFSGHEV. Residues 21-864 are Extracellular-facing; the sequence is RSQQDPPCGG…EKSWLYTLDP (844 aa). 3 disulfide bridges follow: cysteine 28-cysteine 55, cysteine 83-cysteine 105, and cysteine 149-cysteine 175. 2 consecutive CUB domains span residues 28-142 and 149-267; these read CGGR…YEIF and CSKN…YYLI. Residues asparagine 152 and asparagine 157 are each glycosylated (N-linked (GlcNAc...) asparagine). 3 residues coordinate Ca(2+): glutamate 197, aspartate 211, and aspartate 252. Cysteine 208 and cysteine 230 are oxidised to a cystine. Cystine bridges form between cysteine 277/cysteine 427 and cysteine 434/cysteine 592. 2 consecutive F5/8 type C domains span residues 277 to 427 and 434 to 592; these read CNVP…LFGC and CSNM…VLGC. Residues 298-310 show a composition bias toward polar residues; that stretch reads TFSDGRWTPQQSR. Positions 298–317 are disordered; the sequence is TFSDGRWTPQQSRLHGDDNG. A disordered region spans residues 601–621; the sequence is VETLGPTVKSEETTTPYPMDE. Asparagine 629 carries an N-linked (GlcNAc...) asparagine glycan. The 161-residue stretch at 642–802 folds into the MAM domain; the sequence is SGFNCNFDFP…TDVPLENCME (161 aa). Residues 819 to 854 are disordered; it reads THGGEGYEDEIDDEYEGDWSNSSSSTSGAGDPSSGK. Over residues 824–835 the composition is skewed to acidic residues; sequence GYEDEIDDEYEG. Low complexity predominate over residues 836–851; it reads DWSNSSSSTSGAGDPS. The N-linked (GlcNAc...) asparagine glycan is linked to asparagine 839. A helical membrane pass occupies residues 865–889; the sequence is ILITIIAMSSLGVLLGATCAGLLLY. Over 890 to 931 the chain is Cytoplasmic; the sequence is CTCSYSGLSSRSCTTLENYNFELYDGLKHKVKINHQKCCSEA.

The protein belongs to the neuropilin family. Heterodimer with NRP1. Binds PLXNB1. As to expression, expressed in developing CNS, PNS and in some nonneural tissues including limb buds, developing bones, muscles, intestinal epithelium, kidney, lung and submandibular gland.

The protein resides in the membrane. Functionally, high affinity receptor for semaphorins 3C, 3F, VEGF-165 and VEGF-145 isoforms of VEGF, and the PLGF-2 isoform of PGF. The polypeptide is Neuropilin-2 (Nrp2) (Mus musculus (Mouse)).